The sequence spans 559 residues: Formate--tetrahydrofolate ligase (559 aa).

68-75 (TPAGEGKS) lines the ATP pocket.

It belongs to the formate--tetrahydrofolate ligase family.

The catalysed reaction is (6S)-5,6,7,8-tetrahydrofolate + formate + ATP = (6R)-10-formyltetrahydrofolate + ADP + phosphate. Its pathway is one-carbon metabolism; tetrahydrofolate interconversion. The chain is Formate--tetrahydrofolate ligase from Bacillus licheniformis (strain ATCC 14580 / DSM 13 / JCM 2505 / CCUG 7422 / NBRC 12200 / NCIMB 9375 / NCTC 10341 / NRRL NRS-1264 / Gibson 46).